The sequence spans 397 residues: 1-deoxy-D-xylulose 5-phosphate reductoisomerase (397 aa).

NADPH contacts are provided by threonine 17, glycine 18, serine 19, isoleucine 20, asparagine 47, and asparagine 130. A 1-deoxy-D-xylulose 5-phosphate-binding site is contributed by lysine 131. Glutamate 132 contacts NADPH. Aspartate 156 is a Mn(2+) binding site. Residues serine 157, glutamate 158, serine 182, and histidine 205 each coordinate 1-deoxy-D-xylulose 5-phosphate. Residue glutamate 158 participates in Mn(2+) binding. Residue glycine 211 participates in NADPH binding. 4 residues coordinate 1-deoxy-D-xylulose 5-phosphate: serine 218, asparagine 223, lysine 224, and glutamate 227. Glutamate 227 lines the Mn(2+) pocket.

This sequence belongs to the DXR family. Mg(2+) is required as a cofactor. Mn(2+) serves as cofactor.

The enzyme catalyses 2-C-methyl-D-erythritol 4-phosphate + NADP(+) = 1-deoxy-D-xylulose 5-phosphate + NADPH + H(+). It functions in the pathway isoprenoid biosynthesis; isopentenyl diphosphate biosynthesis via DXP pathway; isopentenyl diphosphate from 1-deoxy-D-xylulose 5-phosphate: step 1/6. In terms of biological role, catalyzes the NADPH-dependent rearrangement and reduction of 1-deoxy-D-xylulose-5-phosphate (DXP) to 2-C-methyl-D-erythritol 4-phosphate (MEP). The chain is 1-deoxy-D-xylulose 5-phosphate reductoisomerase from Rhizobium rhizogenes (strain K84 / ATCC BAA-868) (Agrobacterium radiobacter).